Here is a 294-residue protein sequence, read N- to C-terminus: Acetyl-coenzyme A carboxylase carboxyl transferase subunit beta (294 aa).

Residues 30–294 enclose the CoA carboxyltransferase N-terminal domain; it reads IMTKCPECKK…PEVGGEADGE (265 aa). Positions 34, 37, 53, and 56 each coordinate Zn(2+). Residues 34 to 56 form a C4-type zinc finger; the sequence is CPECKKIMYTKELQKNLMVCNYC.

It belongs to the AccD/PCCB family. As to quaternary structure, acetyl-CoA carboxylase is a heterohexamer composed of biotin carboxyl carrier protein (AccB), biotin carboxylase (AccC) and two subunits each of ACCase subunit alpha (AccA) and ACCase subunit beta (AccD). Zn(2+) is required as a cofactor.

Its subcellular location is the cytoplasm. It catalyses the reaction N(6)-carboxybiotinyl-L-lysyl-[protein] + acetyl-CoA = N(6)-biotinyl-L-lysyl-[protein] + malonyl-CoA. It participates in lipid metabolism; malonyl-CoA biosynthesis; malonyl-CoA from acetyl-CoA: step 1/1. Component of the acetyl coenzyme A carboxylase (ACC) complex. Biotin carboxylase (BC) catalyzes the carboxylation of biotin on its carrier protein (BCCP) and then the CO(2) group is transferred by the transcarboxylase to acetyl-CoA to form malonyl-CoA. The protein is Acetyl-coenzyme A carboxylase carboxyl transferase subunit beta of Listeria monocytogenes serotype 4a (strain HCC23).